Reading from the N-terminus, the 204-residue chain is Peptide deformylase (204 aa).

Fe cation-binding residues include cysteine 131 and histidine 174. The active site involves glutamate 175. Histidine 178 contacts Fe cation.

The protein belongs to the polypeptide deformylase family. The cofactor is Fe(2+).

The catalysed reaction is N-terminal N-formyl-L-methionyl-[peptide] + H2O = N-terminal L-methionyl-[peptide] + formate. Removes the formyl group from the N-terminal Met of newly synthesized proteins. Requires at least a dipeptide for an efficient rate of reaction. N-terminal L-methionine is a prerequisite for activity but the enzyme has broad specificity at other positions. The protein is Peptide deformylase of Streptococcus pyogenes serotype M1.